An 809-amino-acid polypeptide reads, in one-letter code: MKIPLKWLKEYLPTDMSPAELAERMTMAGTEVTVLNSRKDKWPNVYVGQIMEVNRHPNADRLVLVKVDWGQGQETVVTGAPNCKAGDKVVFARTGAVLIDGHNGKEMVLKPAVLRGVESCGMVCSERELGLSDEHEGILILPADAPVGMLASEYLGEIILDLELTPNRGDLMCVTGVARELGALIDRLPSISTPDFKATGKDIKDKINIEIKNTKLCTRYTASLIEGIKIGESPDWLKERLIACGMRPINNVVDATNYVMLEFGQPLHSFDYDQIKSKHIIVRPAAEGEVLTTLDGVERKLSPDMLLITEPDKIIALAGVMGGENTEVTEKTASVLLESATFDKHSIRRTAKALKLQSEASARFEKGLSFELAPVALKRATQLILEIAGGQAASGLMDVMPVKKDRNSVVLSLSKVNRVLGLEGEKFDSCKIAKRLGFAWMPEYVPGMEEFGYGSVDDKMRFFPGYWRMDIESDIDMIEEVARIAGYDTIPCLPLDKAIPKIETPPLPGIKRFLRQILSGYGFQELISYSFTSREMLSRVFSGAEPECLAISNPMSSEQEVMRTSLRPALYASLAANRRFEKNGLRLYELGRIYLPKENNKQDEPEMLCALIAGSASEAWWQRNTAGFDFFDAKGIVESLVSRLGIAADFAVSDEPGLTPGYQAGILVGDMPVGVLGQLSPQTADKFGITEPVYMFEINLSKLITRATVRRKFTQINRFPSVERDLALVLDRSITNRQVTDIISEFDLVKNVELFDMYQGKQVAEDKKSLAYHLLFQSDTHTLKDADVDSVMNQILKRLNTETGAVLRS.

The 114-residue stretch at 39–152 folds into the tRNA-binding domain; the sequence is KDKWPNVYVG…ADAPVGMLAS (114 aa). The region spanning 404-492 is the B5 domain; that stretch reads KDRNSVVLSL…RIAGYDTIPC (89 aa). Mg(2+) is bound by residues Asp470, Asp476, Glu479, and Glu480. The FDX-ACB domain maps to 717-808; that stretch reads NRFPSVERDL…LNTETGAVLR (92 aa).

Belongs to the phenylalanyl-tRNA synthetase beta subunit family. Type 1 subfamily. As to quaternary structure, tetramer of two alpha and two beta subunits. Requires Mg(2+) as cofactor.

The protein resides in the cytoplasm. It catalyses the reaction tRNA(Phe) + L-phenylalanine + ATP = L-phenylalanyl-tRNA(Phe) + AMP + diphosphate + H(+). This chain is Phenylalanine--tRNA ligase beta subunit, found in Dehalococcoides mccartyi (strain ATCC BAA-2266 / KCTC 15142 / 195) (Dehalococcoides ethenogenes (strain 195)).